The following is a 409-amino-acid chain: NADH-quinone oxidoreductase subunit D (409 aa).

The protein belongs to the complex I 49 kDa subunit family. In terms of assembly, NDH-1 is composed of 14 different subunits. Subunits NuoB, C, D, E, F, and G constitute the peripheral sector of the complex.

The protein resides in the cell inner membrane. It carries out the reaction a quinone + NADH + 5 H(+)(in) = a quinol + NAD(+) + 4 H(+)(out). Its function is as follows. NDH-1 shuttles electrons from NADH, via FMN and iron-sulfur (Fe-S) centers, to quinones in the respiratory chain. The immediate electron acceptor for the enzyme in this species is believed to be ubiquinone. Couples the redox reaction to proton translocation (for every two electrons transferred, four hydrogen ions are translocated across the cytoplasmic membrane), and thus conserves the redox energy in a proton gradient. The protein is NADH-quinone oxidoreductase subunit D of Helicobacter hepaticus (strain ATCC 51449 / 3B1).